The sequence spans 629 residues: tRNA uridine 5-carboxymethylaminomethyl modification enzyme MnmG (629 aa).

FAD contacts are provided by residues 13-18 (GGGHAG), V125, and S180. Residue 273–287 (GPRYCPSIEDKVMRF) participates in NAD(+) binding. Residue Q370 coordinates FAD.

The protein belongs to the MnmG family. In terms of assembly, homodimer. Heterotetramer of two MnmE and two MnmG subunits. FAD serves as cofactor.

It localises to the cytoplasm. Functionally, NAD-binding protein involved in the addition of a carboxymethylaminomethyl (cmnm) group at the wobble position (U34) of certain tRNAs, forming tRNA-cmnm(5)s(2)U34. This is tRNA uridine 5-carboxymethylaminomethyl modification enzyme MnmG from Escherichia coli O127:H6 (strain E2348/69 / EPEC).